Reading from the N-terminus, the 235-residue chain is Uridylate kinase (235 aa).

8-11 (KFSG) is a binding site for ATP. The segment at 16–21 (GKEGYG) is involved in allosteric activation by GTP. Residue Gly-50 participates in UMP binding. 2 residues coordinate ATP: Gly-51 and Arg-55. Residues Asp-71 and 132-139 (TGNPYFTT) contribute to the UMP site. ATP contacts are provided by Thr-159, Tyr-165, and Asp-168.

Belongs to the UMP kinase family. As to quaternary structure, homohexamer.

The protein localises to the cytoplasm. It carries out the reaction UMP + ATP = UDP + ADP. Its pathway is pyrimidine metabolism; CTP biosynthesis via de novo pathway; UDP from UMP (UMPK route): step 1/1. With respect to regulation, allosterically activated by GTP. Inhibited by UTP. Catalyzes the reversible phosphorylation of UMP to UDP. The protein is Uridylate kinase of Sulfurovum sp. (strain NBC37-1).